A 938-amino-acid chain; its full sequence is Glutamate receptor 3.1 (938 aa).

Residues 1 to 20 form the signal peptide; the sequence is MKFIFYLFSIFCCLCSCAQS. The Extracellular portion of the chain corresponds to 21–588; it reads QNISGRPDAV…GGWAFLQPFT (568 aa). Residues N22, N39, N59, N340, N418, N436, and N551 are each glycosylated (N-linked (GlcNAc...) asparagine). A helical transmembrane segment spans residues 589–609; sequence IKMWTVTGLFFLIIGTVVWML. Residues 610–618 lie on the Cytoplasmic side of the membrane; sequence EHRINDEFR. Residues 619-639 form a helical membrane-spanning segment; sequence GPPAKQLITVFWFSFSTLFFA. At 640–650 the chain is on the cytoplasmic side; sequence HREDTRSTLGR. The chain crosses the membrane as a helical span at residues 651–671; sequence FVIIIWLFVVLIIQSSYTASL. The Extracellular portion of the chain corresponds to 672-830; it reads TSILTVQQLT…ELDQDPDRLD (159 aa). A helical transmembrane segment spans residues 831-851; sequence VYSFSALFLICGLACIFALAI. Residues 852–938 are Cytoplasmic-facing; it reads HACNLFYQYS…SGSGSTTASC (87 aa). A disordered region spans residues 906–938; it reads AAKEKASGLGGSGGSMSGVSFTSSGSGSTTASC. The span at 922–938 shows a compositional bias: low complexity; sequence SGVSFTSSGSGSTTASC.

This sequence belongs to the glutamate-gated ion channel (TC 1.A.10.1) family. In terms of assembly, may form homomultimers. In terms of tissue distribution, expressed at low levels in roots and leaves.

The protein resides in the membrane. Functionally, glutamate-gated receptor that probably acts as a non-selective cation channel. Involved in root development. May regulate cell proliferation and cell death in the root apex. This chain is Glutamate receptor 3.1 (GLR3.1), found in Oryza sativa subsp. japonica (Rice).